The following is a 181-amino-acid chain: Nucleoside triphosphate/diphosphate phosphatase (181 aa).

Arg-26 functions as the Proton donor in the catalytic mechanism. Residues Asn-90, Asp-106, Asp-108, Asp-110, Asp-123, and Glu-126 each contribute to the Mg(2+) site.

It belongs to the Ntdp family. Mg(2+) serves as cofactor.

It carries out the reaction a ribonucleoside 5'-triphosphate + H2O = a ribonucleoside 5'-diphosphate + phosphate + H(+). The catalysed reaction is a ribonucleoside 5'-diphosphate + H2O = a ribonucleoside 5'-phosphate + phosphate + H(+). Functionally, has nucleoside phosphatase activity towards nucleoside triphosphates and nucleoside diphosphates. This is Nucleoside triphosphate/diphosphate phosphatase from Staphylococcus carnosus (strain TM300).